Here is a 507-residue protein sequence, read N- to C-terminus: RNA-splicing ligase RtcB homolog (507 aa).

The Mn(2+) site is built by Asp-121, Cys-124, His-229, His-261, and His-355. 228-232 (NHYAE) is a binding site for GMP. Residues 355–356 (HN), 404–407 (GGTM), Ser-411, 430–433 (HGAG), and Lys-506 each bind GMP. His-430 functions as the GMP-histidine intermediate in the catalytic mechanism.

It belongs to the RtcB family. In terms of assembly, catalytic component of the tRNA-splicing ligase complex. Mn(2+) is required as a cofactor.

It catalyses the reaction a 3'-end 3'-phospho-ribonucleotide-RNA + a 5'-end dephospho-ribonucleoside-RNA + GTP = a ribonucleotidyl-ribonucleotide-RNA + GMP + diphosphate. The catalysed reaction is a 3'-end 2',3'-cyclophospho-ribonucleotide-RNA + a 5'-end dephospho-ribonucleoside-RNA + GTP + H2O = a ribonucleotidyl-ribonucleotide-RNA + GMP + diphosphate + H(+). Functionally, catalytic subunit of the tRNA-splicing ligase complex that acts by directly joining spliced tRNA halves to mature-sized tRNAs by incorporating the precursor-derived splice junction phosphate into the mature tRNA as a canonical 3',5'-phosphodiester. May act as an RNA ligase with broad substrate specificity, and may function toward other RNAs. This is RNA-splicing ligase RtcB homolog from Micromonas pusilla (strain CCMP1545) (Picoplanktonic green alga).